A 119-amino-acid polypeptide reads, in one-letter code: Large ribosomal subunit protein uL18 (119 aa).

This sequence belongs to the universal ribosomal protein uL18 family. In terms of assembly, part of the 50S ribosomal subunit; part of the 5S rRNA/L5/L18/L25 subcomplex. Contacts the 5S and 23S rRNAs.

Its function is as follows. This is one of the proteins that bind and probably mediate the attachment of the 5S RNA into the large ribosomal subunit, where it forms part of the central protuberance. The protein is Large ribosomal subunit protein uL18 of Legionella pneumophila (strain Paris).